A 351-amino-acid polypeptide reads, in one-letter code: Ion-translocating oxidoreductase complex subunit D (351 aa).

A run of 4 helical transmembrane segments spans residues 18–38, 40–60, 87–107, and 121–141; these read IMLL…YFFG, GSLI…GAVL, LPPL…IVIA, and PAMV…TSWL. T185 is modified (FMN phosphoryl threonine). The next 5 helical transmembrane spans lie at 211-231, 241-261, 264-284, 298-318, and 320-340; these read VLAG…GLLL, IPVS…MIAP, FASP…FFIA, LIFG…GGYP, and GVAF…HYTQ.

It belongs to the NqrB/RnfD family. In terms of assembly, the complex is composed of six subunits: RnfA, RnfB, RnfC, RnfD, RnfE and RnfG. FMN is required as a cofactor.

The protein resides in the cell inner membrane. In terms of biological role, part of a membrane-bound complex that couples electron transfer with translocation of ions across the membrane. The polypeptide is Ion-translocating oxidoreductase complex subunit D (Yersinia pseudotuberculosis serotype O:1b (strain IP 31758)).